A 453-amino-acid polypeptide reads, in one-letter code: MVQKYFGTDGIRGKANSFPMTPDFAMKVGMAVGVLFRSQHQSRRVVIGKDTRLSGYMLENALVSGLTAAGMDVFLLGPVPTPAVAMLCRSLRADLGVMISASHNPFYDNGIKLFGPDGFKLSDDMEAKIEQLIDTDLSKSLASSAEIGSAKRVEGDIYRYIEYAKRTLPRDVRLDAVRIVVDCANGAAYKAAPRALWELGAEVFAIHDEPNGTNINQKCGSTDLSSLKRKVHEVRADVGIALDGDGDRVLIVDEKAQTVDGDQLIAVIAENWHKMGRLRCNGVVTTIMSNLGLERFLNGKGLDLIRTKVGDRYVVDAMRQKGYNVGGEASGHIVLSDFGTTGDGLVAALQILACMKESQNPMSQLCQRFEPVPQILKNVTIKNKNVLKKNPVKTAIDQAEKRLGKEARLVIRASGTEPVIRLMAEGDAREVLDTVVTELMDVITHHDTRVDCI.

Ser-102 acts as the Phosphoserine intermediate in catalysis. The Mg(2+) site is built by Ser-102, Asp-243, Asp-245, and Asp-247. Ser-102 is subject to Phosphoserine.

This sequence belongs to the phosphohexose mutase family. Mg(2+) is required as a cofactor. In terms of processing, activated by phosphorylation.

It carries out the reaction alpha-D-glucosamine 1-phosphate = D-glucosamine 6-phosphate. Functionally, catalyzes the conversion of glucosamine-6-phosphate to glucosamine-1-phosphate. The polypeptide is Phosphoglucosamine mutase (Bartonella tribocorum (strain CIP 105476 / IBS 506)).